The primary structure comprises 374 residues: Methionine import ATP-binding protein MetN 2 (374 aa).

The interval 1-22 (MSVATLQRKLPEAAPRRAGQTE) is disordered. In terms of domain architecture, ABC transporter spans 32–271 (VRFIGLGKTY…PQHEVSKTLL (240 aa)). Position 68–75 (68–75 (GRSGAGKS)) interacts with ATP.

It belongs to the ABC transporter superfamily. Methionine importer (TC 3.A.1.24) family. As to quaternary structure, the complex is composed of two ATP-binding proteins (MetN), two transmembrane proteins (MetI) and a solute-binding protein (MetQ).

The protein localises to the cell inner membrane. The enzyme catalyses L-methionine(out) + ATP + H2O = L-methionine(in) + ADP + phosphate + H(+). It carries out the reaction D-methionine(out) + ATP + H2O = D-methionine(in) + ADP + phosphate + H(+). In terms of biological role, part of the ABC transporter complex MetNIQ involved in methionine import. Responsible for energy coupling to the transport system. In Pseudomonas fluorescens (strain ATCC BAA-477 / NRRL B-23932 / Pf-5), this protein is Methionine import ATP-binding protein MetN 2.